We begin with the raw amino-acid sequence, 98 residues long: Small ribosomal subunit protein bS20 (98 aa).

Basic residues predominate over residues 1–15 (MAPKKTTKKGGPKKR). A disordered region spans residues 1–21 (MAPKKTTKKGGPKKRPSAEKR).

It belongs to the bacterial ribosomal protein bS20 family.

Binds directly to 16S ribosomal RNA. The polypeptide is Small ribosomal subunit protein bS20 (Chlamydia abortus (strain DSM 27085 / S26/3) (Chlamydophila abortus)).